A 174-amino-acid polypeptide reads, in one-letter code: Small ribosomal subunit protein uS4 (174 aa).

Residues 105 to 169 (RRLQTVAYRK…SPLADDLHPE (65 aa)) form the S4 RNA-binding domain.

The protein belongs to the universal ribosomal protein uS4 family. Part of the 30S ribosomal subunit. Contacts protein S5. The interaction surface between S4 and S5 is involved in control of translational fidelity.

Its function is as follows. One of the primary rRNA binding proteins, it binds directly to 16S rRNA where it nucleates assembly of the body of the 30S subunit. With S5 and S12 plays an important role in translational accuracy. The polypeptide is Small ribosomal subunit protein uS4 (Natronomonas pharaonis (strain ATCC 35678 / DSM 2160 / CIP 103997 / JCM 8858 / NBRC 14720 / NCIMB 2260 / Gabara) (Halobacterium pharaonis)).